The chain runs to 494 residues: U3 small nucleolar RNA-associated protein 15 (494 aa).

7 WD repeats span residues 37 to 76, 79 to 118, 121 to 161, 164 to 202, 205 to 243, 248 to 287, and 289 to 328; these read KEYS…VKKT, RFKD…ILRA, AHQF…VQYD, GHED…PEVM, SHGE…QTPT, NHQK…VVHG, and KYSG…QTSS.

Component of the ribosomal small subunit (SSU) processome.

It localises to the nucleus. The protein resides in the nucleolus. In terms of biological role, involved in nucleolar processing of pre-18S ribosomal RNA. Required for optimal pre-ribosomal RNA transcription by RNA polymerase I together with a subset of U3 proteins required for transcription (t-UTPs). The chain is U3 small nucleolar RNA-associated protein 15 (utp15) from Schizosaccharomyces pombe (strain 972 / ATCC 24843) (Fission yeast).